A 427-amino-acid chain; its full sequence is Heterogeneous nuclear ribonucleoprotein K (427 aa).

The disordered stretch occupies residues 1 to 34 (METEQQEETFTNTETNGKRPAEDMEEEQAFKRSR). The segment covering 16–34 (NGKRPAEDMEEEQAFKRSR) has biased composition (basic and acidic residues). KH domains are found at residues 39–101 (MVEL…LKKI) and 117–182 (DCEL…IKII). Repeat copies occupy residues 51 to 73 (AGAV…NASV) and 56 to 59 (GKGG). The tract at residues 51–385 (AGAVIGKGGK…QIRHESGASI (335 aa)) is 2 X 22 AA approximate repeats. The interval 56–371 (GKGGKNIKAL…LAGSIIGKGG (316 aa)) is 5 X 4 AA repeats of G-X-G-G. Positions 209-246 (YGGFTMMFDDRRGRPVGFPMRGRGGFDRMPPNRGGRPM) are RNA-binding RGG-box. Repeat copies occupy residues 218-223 (DRRGRP), 230-233 (GRGG), and 240-243 (NRGG). Residues 218–302 (DRRGRPVGFP…LMSYDRRGRP (85 aa)) are 2 X 6 AA approximate repeats. Residues 221–305 (GRPVGFPMRG…YDRRGRPGDR (85 aa)) form a disordered region. A compositionally biased stretch (basic and acidic residues) spans 249–258 (SRRDYDDMSP). A run of 4 repeats spans residues 268-271 (GRGG), 297-302 (DRRGRP), 363-385 (AGSI…GASI), and 368-371 (GKGG). Over residues 295-305 (SYDRRGRPGDR) the composition is skewed to basic and acidic residues. The KH 3 domain occupies 351–415 (IITTQVTIPK…DQIQNAQYLL (65 aa)).

It localises to the cytoplasm. Its subcellular location is the nucleus. It is found in the nucleoplasm. In terms of biological role, one of the major pre-mRNA-binding proteins. Binds tenaciously to poly(C) sequences. Likely to play a role in the nuclear metabolism of hnRNAs, particularly for pre-mRNAs that contain cytidine-rich sequences. Can also bind poly(C) single-stranded DNA. May play an important role in p53/TP53 response to DNA damage, acting at the level of both transcription activation and repression. As part of a ribonucleoprotein complex, may negatively regulate the transcription of genes involved in neuronal differentiation. The sequence is that of Heterogeneous nuclear ribonucleoprotein K (HNRNPK) from Gallus gallus (Chicken).